The following is a 387-amino-acid chain: Proline-rich protein 5 (387 aa).

2 interaction with RICTOR regions span residues 10–96 (MSSP…LTKG) and 189–219 (HESRGVTEDYLRLETLIQKVVSPYLGTYGLY). Residues 13 to 34 (PSLSDLGKREPGAAGTDERGTQ) form a disordered region. The segment covering 18-33 (LGKREPGAAGTDERGT) has biased composition (basic and acidic residues). Serine 253 bears the Phosphoserine mark. The disordered stretch occupies residues 262–387 (NPVAEHEAEG…EAPGGRPSVV (126 aa)). The segment covering 305–314 (SGTFRSSPTP) has biased composition (polar residues). Serine 373 is modified (phosphoserine).

The protein belongs to the PROTOR family. Associated component of the mechanistic target of rapamycin complex 2 (mTORC2). Binds directly to MTOR and RICTOR within the TORC2 complex. Ubiquitously expressed. Expressed at high levels in kidney.

Functionally, associated subunit of mTORC2, which regulates cell growth and survival in response to hormonal signals. mTORC2 is activated by growth factors, but, in contrast to mTORC1, seems to be nutrient-insensitive. mTORC2 seems to function upstream of Rho GTPases to regulate the actin cytoskeleton, probably by activating one or more Rho-type guanine nucleotide exchange factors. PRR5 plays an important role in regulation of PDGFRB expression and in modulation of platelet-derived growth factor signaling. May act as a tumor suppressor in breast cancer. This Mus musculus (Mouse) protein is Proline-rich protein 5.